Here is a 483-residue protein sequence, read N- to C-terminus: Protein nucleotidyltransferase YdiU (483 aa).

Positions 87, 89, 90, 110, 122, 123, 173, and 180 each coordinate ATP. The Proton acceptor role is filled by Asp-249. The Mg(2+) site is built by Asn-250 and Asp-259. Residue Asp-259 coordinates ATP.

This sequence belongs to the SELO family. The cofactor is Mg(2+). Requires Mn(2+) as cofactor.

The catalysed reaction is L-seryl-[protein] + ATP = 3-O-(5'-adenylyl)-L-seryl-[protein] + diphosphate. The enzyme catalyses L-threonyl-[protein] + ATP = 3-O-(5'-adenylyl)-L-threonyl-[protein] + diphosphate. It carries out the reaction L-tyrosyl-[protein] + ATP = O-(5'-adenylyl)-L-tyrosyl-[protein] + diphosphate. It catalyses the reaction L-histidyl-[protein] + UTP = N(tele)-(5'-uridylyl)-L-histidyl-[protein] + diphosphate. The catalysed reaction is L-seryl-[protein] + UTP = O-(5'-uridylyl)-L-seryl-[protein] + diphosphate. The enzyme catalyses L-tyrosyl-[protein] + UTP = O-(5'-uridylyl)-L-tyrosyl-[protein] + diphosphate. Nucleotidyltransferase involved in the post-translational modification of proteins. It can catalyze the addition of adenosine monophosphate (AMP) or uridine monophosphate (UMP) to a protein, resulting in modifications known as AMPylation and UMPylation. The protein is Protein nucleotidyltransferase YdiU of Pectobacterium carotovorum subsp. carotovorum (strain PC1).